A 151-amino-acid polypeptide reads, in one-letter code: Neuroglobin (151 aa).

The region spanning 1–149 (MERPEHELIR…VVQAMSRGWN (149 aa)) is the Globin domain. The heme b site is built by His64 and His96.

The protein belongs to the globin family. In terms of assembly, monomer. Homodimer and homotetramer; disulfide-linked. Mainly monomeric but also detected as part of homodimers and homotetramers. Interacts with 14-3-3 proteins; regulates the phosphorylation of NGB. Could interact (ferrous form) with G-alpha(i) proteins (GTP-bound form). Phosphorylated during hypoxia by ERK1/ERK2. Phosphorylation regulates the heme pocket hexacoordination preventing the association of His-64 with the heme metal center. Thereby, promotes the access of dioxygen and nitrite to the heme and stimulates the nitrite reductase activity. Phosphorylation during hypoxia is stabilized by 14-3-3 proteins.

It localises to the cytoplasm. It is found in the cytosol. Its subcellular location is the mitochondrion matrix. It catalyses the reaction Fe(III)-heme b-[protein] + nitric oxide + H2O = Fe(II)-heme b-[protein] + nitrite + 2 H(+). Its function is as follows. Monomeric globin with a bis-histidyl six-coordinate heme-iron atom through which it can bind dioxygen, carbon monoxide and nitric oxide. Could help transport oxygen and increase its availability to the metabolically active neuronal tissues, though its low quantity in tissues as well as its high affinity for dioxygen, which may limit its oxygen-releasing ability, argue against it. The ferrous/deoxygenated form exhibits a nitrite reductase activity and it could produce nitric oxide which in turn inhibits cellular respiration in response to hypoxia. In its ferrous/deoxygenated state, it may also exhibit GDI (Guanine nucleotide Dissociation Inhibitor) activity toward heterotrimeric G-alpha proteins, thereby regulating signal transduction to facilitate neuroprotective responses in the wake of hypoxia and associated oxidative stress. The sequence is that of Neuroglobin from Sus scrofa (Pig).